A 393-amino-acid polypeptide reads, in one-letter code: Probable acetyl-CoA acyltransferase (393 aa).

Residue C88 is the Acyl-thioester intermediate of the active site. Residues H349 and C378 each act as proton acceptor in the active site.

This sequence belongs to the thiolase-like superfamily. Thiolase family.

The protein localises to the cytoplasm. It carries out the reaction 2 acetyl-CoA = acetoacetyl-CoA + CoA. In Staphylococcus aureus (strain Mu50 / ATCC 700699), this protein is Probable acetyl-CoA acyltransferase.